Here is a 121-residue protein sequence, read N- to C-terminus: Phosphoribosyl-ATP pyrophosphatase (121 aa).

It belongs to the PRA-PH family.

The protein localises to the cytoplasm. The enzyme catalyses 1-(5-phospho-beta-D-ribosyl)-ATP + H2O = 1-(5-phospho-beta-D-ribosyl)-5'-AMP + diphosphate + H(+). It functions in the pathway amino-acid biosynthesis; L-histidine biosynthesis; L-histidine from 5-phospho-alpha-D-ribose 1-diphosphate: step 2/9. The protein is Phosphoribosyl-ATP pyrophosphatase of Burkholderia multivorans (strain ATCC 17616 / 249).